Here is a 152-residue protein sequence, read N- to C-terminus: Small ribosomal subunit protein uS15 (152 aa).

The segment covering 1-11 (MAKMHTKRKGK) has biased composition (basic residues). Residues 1–24 (MAKMHTKRKGKSSSTRPNRTEPPE) are disordered.

This sequence belongs to the universal ribosomal protein uS15 family. As to quaternary structure, part of the 30S ribosomal subunit.

This Methanosarcina mazei (strain ATCC BAA-159 / DSM 3647 / Goe1 / Go1 / JCM 11833 / OCM 88) (Methanosarcina frisia) protein is Small ribosomal subunit protein uS15.